We begin with the raw amino-acid sequence, 315 residues long: Probable NAD(P)H-dependent D-xylose reductase xyl1 (315 aa).

The active-site Proton donor is the Tyr-50. His-112 contributes to the substrate binding site. Residues 166 to 167 (SN), 215 to 224 (SSFGPLSFVE), and 271 to 281 (KSNDPTRLAQN) contribute to the NAD(+) site.

Belongs to the aldo/keto reductase family.

The catalysed reaction is xylitol + NAD(+) = D-xylose + NADH + H(+). It carries out the reaction xylitol + NADP(+) = D-xylose + NADPH + H(+). Its pathway is carbohydrate metabolism; D-xylose degradation. In terms of biological role, catalyzes the initial reaction in the xylose utilization pathway by reducing D-xylose into xylitol. Xylose is a major component of hemicelluloses such as xylan. Most fungi utilize D-xylose via three enzymatic reactions, xylose reductase (XR), xylitol dehydrogenase (XDH), and xylulokinase, to form xylulose 5-phosphate, which enters pentose phosphate pathway. In Aspergillus fumigatus (strain ATCC MYA-4609 / CBS 101355 / FGSC A1100 / Af293) (Neosartorya fumigata), this protein is Probable NAD(P)H-dependent D-xylose reductase xyl1 (xyl1).